A 192-amino-acid chain; its full sequence is Orotate phosphoribosyltransferase (192 aa).

116–124 (EDVVTTGKS) is a binding site for 5-phospho-alpha-D-ribose 1-diphosphate. Positions 120 and 148 each coordinate orotate.

The protein belongs to the purine/pyrimidine phosphoribosyltransferase family. PyrE subfamily. Homodimer. Mg(2+) is required as a cofactor.

The enzyme catalyses orotidine 5'-phosphate + diphosphate = orotate + 5-phospho-alpha-D-ribose 1-diphosphate. Its pathway is pyrimidine metabolism; UMP biosynthesis via de novo pathway; UMP from orotate: step 1/2. Catalyzes the transfer of a ribosyl phosphate group from 5-phosphoribose 1-diphosphate to orotate, leading to the formation of orotidine monophosphate (OMP). This is Orotate phosphoribosyltransferase from Clostridium perfringens (strain ATCC 13124 / DSM 756 / JCM 1290 / NCIMB 6125 / NCTC 8237 / Type A).